Reading from the N-terminus, the 612-residue chain is MSKIIGIDLGTTNSCVSVMEGGEAVVIPNPEGNRTSPSVVAFKNGERQVGEVAKRQAITNPNTIQSIKRHMGTDYKVKIEEKEYTPQEVSAIILQYIKSYAEDYIGEKVEKAVITVPAYFNDAERQATKDAGKIAGLEVERIINEPTAAALAYGIDKEDQDQTILVYDLGGGTFDVSILDIGDGTFEVVSTAGDNRLGGDDFDQVIIDHMVQEFKKENAIDLSQDKMATQRLKDAAEKAKKDLSGVTQTQISLPFITAGDAGPLHLEMTMSRAKFDELSSDLVERTMQPTRKALSDASLSKSDIDKVILVGGSTRIPAVQEAIKKELGQDPSKGVNPDEVVALGAAIQGGVLQGDVKDVLLLDVTPLSLGIETMGAVTTKLIERNTTIPTSASQTFSTAADNQTAVDIHVLQGEREMASDNKTLGRFQLTDIPPAPRGMPQIEVSFDIDANGIVNVRAKDLGTNKEQSITIKSSSGLSDDEVDRMVKEAEENADADKQRREEVDLRNEADQLIFTTDKTIKDLDDKVSEEDKQKAESAKDELKQALESGDMEQVKAKKDALEEHVQQLSAKLYEQVQQEAQQASGEQGEESGNQDDDVVDADYSEVDDDDKK.

Thr173 is modified (phosphothreonine; by autocatalysis). The segment covering 524–544 (DDKVSEEDKQKAESAKDELKQ) has biased composition (basic and acidic residues). Disordered regions lie at residues 524-560 (DDKV…KKDA) and 572-612 (LYEQ…DDKK). Over residues 574 to 586 (EQVQQEAQQASGE) the composition is skewed to low complexity. The segment covering 587–612 (QGEESGNQDDDVVDADYSEVDDDDKK) has biased composition (acidic residues).

The protein belongs to the heat shock protein 70 family.

Acts as a chaperone. The polypeptide is Chaperone protein DnaK (Oceanobacillus iheyensis (strain DSM 14371 / CIP 107618 / JCM 11309 / KCTC 3954 / HTE831)).